A 229-amino-acid polypeptide reads, in one-letter code: Large ribosomal subunit protein uL1 (229 aa).

It belongs to the universal ribosomal protein uL1 family. Part of the 50S ribosomal subunit.

In terms of biological role, binds directly to 23S rRNA. The L1 stalk is quite mobile in the ribosome, and is involved in E site tRNA release. Its function is as follows. Protein L1 is also a translational repressor protein, it controls the translation of the L11 operon by binding to its mRNA. The chain is Large ribosomal subunit protein uL1 from Streptococcus equi subsp. equi (strain 4047).